The following is a 249-amino-acid chain: 23S rRNA (guanosine-2'-O-)-methyltransferase RlmB (249 aa).

S-adenosyl-L-methionine contacts are provided by G200, I220, and L229.

It belongs to the class IV-like SAM-binding methyltransferase superfamily. RNA methyltransferase TrmH family. RlmB subfamily.

The protein resides in the cytoplasm. The catalysed reaction is guanosine(2251) in 23S rRNA + S-adenosyl-L-methionine = 2'-O-methylguanosine(2251) in 23S rRNA + S-adenosyl-L-homocysteine + H(+). Its function is as follows. Specifically methylates the ribose of guanosine 2251 in 23S rRNA. This Xylella fastidiosa (strain Temecula1 / ATCC 700964) protein is 23S rRNA (guanosine-2'-O-)-methyltransferase RlmB.